An 88-amino-acid polypeptide reads, in one-letter code: UPF0297 protein BcerKBAB4_4234 (88 aa).

It belongs to the UPF0297 family.

In Bacillus mycoides (strain KBAB4) (Bacillus weihenstephanensis), this protein is UPF0297 protein BcerKBAB4_4234.